Consider the following 245-residue polypeptide: tRNA pseudouridine synthase A (245 aa).

Asp-52 serves as the catalytic Nucleophile. A substrate-binding site is contributed by Tyr-111.

This sequence belongs to the tRNA pseudouridine synthase TruA family. As to quaternary structure, homodimer.

The enzyme catalyses uridine(38/39/40) in tRNA = pseudouridine(38/39/40) in tRNA. Its function is as follows. Formation of pseudouridine at positions 38, 39 and 40 in the anticodon stem and loop of transfer RNAs. This Rhodospirillum centenum (strain ATCC 51521 / SW) protein is tRNA pseudouridine synthase A.